A 455-amino-acid polypeptide reads, in one-letter code: Glutamate-1-semialdehyde 2,1-aminomutase (455 aa).

Lysine 286 is modified (N6-(pyridoxal phosphate)lysine).

The protein belongs to the class-III pyridoxal-phosphate-dependent aminotransferase family. HemL subfamily. In terms of assembly, homodimer. Pyridoxal 5'-phosphate is required as a cofactor.

It is found in the cytoplasm. The enzyme catalyses (S)-4-amino-5-oxopentanoate = 5-aminolevulinate. Its pathway is porphyrin-containing compound metabolism; protoporphyrin-IX biosynthesis; 5-aminolevulinate from L-glutamyl-tRNA(Glu): step 2/2. The protein is Glutamate-1-semialdehyde 2,1-aminomutase of Clavibacter sepedonicus (Clavibacter michiganensis subsp. sepedonicus).